Consider the following 277-residue polypeptide: Caspase-3 (277 aa).

Methionine 1 carries the post-translational modification N-acetylmethionine. 2 propeptides span residues 1-9 (MENNETSVD) and 10-28 (SKSI…KSMD). Position 11 is an N6-acetyllysine (lysine 11). Serine 26 is modified (phosphoserine). Catalysis depends on residues histidine 121 and cysteine 163. Position 163 is an S-nitrosocysteine; in inhibited form (cysteine 163).

This sequence belongs to the peptidase C14A family. In terms of assembly, heterotetramer that consists of two anti-parallel arranged heterodimers, each one formed by a 17 kDa (p17) and a 12 kDa (p12) subunit. Interacts with BIRC6/bruce. Cleavage by granzyme B, caspase-6, caspase-8 and caspase-10 generates the two active subunits. Additional processing of the propeptides is likely due to the autocatalytic activity of the activated protease. Active heterodimers between the small subunit of caspase-7 protease and the large subunit of caspase-3 also occur and vice versa. Post-translationally, S-nitrosylated on its catalytic site cysteine in unstimulated cell lines and denitrosylated upon activation of the Fas apoptotic pathway, associated with an increase in intracellular caspase activity. Fas therefore activates caspase-3 not only by inducing the cleavage of the caspase zymogen to its active subunits, but also by stimulating the denitrosylation of its active site thiol. In terms of processing, ubiquitinated by BIRC6; this activity is inhibited by DIABLO/SMAC.

It is found in the cytoplasm. It catalyses the reaction Strict requirement for an Asp residue at positions P1 and P4. It has a preferred cleavage sequence of Asp-Xaa-Xaa-Asp-|- with a hydrophobic amino-acid residue at P2 and a hydrophilic amino-acid residue at P3, although Val or Ala are also accepted at this position.. With respect to regulation, inhibited by BIRC6; following inhibition of BIRC6-caspase binding by DIABLO/SMAC, BIRC6 is subjected to caspase cleavage, leading to an increase in active caspases. Its function is as follows. Involved in the activation cascade of caspases responsible for apoptosis execution. At the onset of apoptosis, it proteolytically cleaves poly(ADP-ribose) polymerase PARP1 at a '216-Asp-|-Gly-217' bond. Cleaves and activates sterol regulatory element binding proteins (SREBPs) between the basic helix-loop-helix leucine zipper domain and the membrane attachment domain. Cleaves and activates caspase-6, -7 and -9 (CASP6, CASP7 and CASP9, respectively). Cleaves and inactivates interleukin-18 (IL18). Triggers cell adhesion in sympathetic neurons through RET cleavage. Cleaves IL-1 beta between an Asp and an Ala, releasing the mature cytokine which is involved in a variety of inflammatory processes. Cleaves and inhibits serine/threonine-protein kinase AKT1 in response to oxidative stress. Acts as an inhibitor of type I interferon production during virus-induced apoptosis by mediating cleavage of antiviral proteins CGAS, IRF3 and MAVS, thereby preventing cytokine overproduction. Also involved in pyroptosis by mediating cleavage and activation of gasdermin-E (GSDME). Cleaves XRCC4 and phospholipid scramblase proteins XKR4, XKR8 and XKR9, leading to promote phosphatidylserine exposure on apoptotic cell surface. Cleaves BIRC6 following inhibition of BIRC6-caspase binding by DIABLO/SMAC. This Mesocricetus auratus (Golden hamster) protein is Caspase-3 (CASP3).